Consider the following 518-residue polypeptide: Vesicular inhibitory amino acid transporter (518 aa).

The Cytoplasmic segment spans residues 1 to 125 (MATLIRSKLS…WNVTNAIQGM (125 aa)). The segment at 66–98 (EVPSGDPTAEGDSHYQRDGTGPPSSASKDEGLC) is disordered. The helical transmembrane segment at 126-146 (FVLGLPYAILHGGYLGLFLII) threads the bilayer. The Lumenal, vesicle segment spans residues 147-197 (FAAVVCCYTGKILIACLYEENEDGETVRVRDSYVDIANACCAPRFPKLGGR). A helical transmembrane segment spans residues 198–218 (VVNVAQIIELVMTCILYVVVS). Over 219-258 (GNLMYNSFPSLPISQKSWSIIATAMLLPCAFLKNLKAVSK) the chain is Cytoplasmic. The helical transmembrane segment at 259-279 (FSLLCTLAHFVINVLVIAYCL) threads the bilayer. The Lumenal, vesicle segment spans residues 280–298 (SRARDWAWDKVKFYIDVKK). Residues 299 to 319 (FPISIGIIVFSYTSQIFLPSL) form a helical membrane-spanning segment. Residues 320–334 (EGNMQSPKEFHCMMN) lie on the Cytoplasmic side of the membrane. The chain crosses the membrane as a helical span at residues 335–355 (WTHIAACILKGLFALVAYLTW). Residues 356–376 (ADETKEVITDNLPSTIRAVVN) lie on the Lumenal, vesicle side of the membrane. Residues 377–397 (LFLVAKALLSYPLPFFAAVEV) traverse the membrane as a helical segment. Over 398–431 (LEKSLFQEGARAFFPNCYGGDGRLKSWGLTLRCA) the chain is Cytoplasmic. A helical transmembrane segment spans residues 432 to 452 (LVVFTLLMAIYVPHFALLMGL). At 453–454 (TG) the chain is on the lumenal, vesicle side. Residues 455-475 (SLTGAGLCFLLPSLFHLKLLW) traverse the membrane as a helical segment. Residues 476–482 (RKLQWHQ) are Cytoplasmic-facing. Residues 483-503 (VFFDVSIFVIGSICSVSGFVH) form a helical membrane-spanning segment. Residues 504 to 518 (SLEGLIEAFRFNIED) lie on the Lumenal, vesicle side of the membrane.

This sequence belongs to the amino acid/polyamine transporter 2 family.

It is found in the cytoplasmic vesicle membrane. Its subcellular location is the presynapse. It catalyses the reaction 4-aminobutanoate(out) + n H(+)(in) = 4-aminobutanoate(in) + n H(+)(out). The catalysed reaction is glycine(out) + n H(+)(in) = glycine(in) + n H(+)(out). It carries out the reaction beta-alanine(out) + n H(+)(in) = beta-alanine(in) + n H(+)(out). In terms of biological role, antiporter that exchanges vesicular protons for cytosolic 4-aminobutanoate or to a lesser extend glycine, thus allowing their secretion from nerve terminals. The transport is equally dependent on the chemical and electrical components of the proton gradient. May also transport beta-alanine. Acidification of GABAergic synaptic vesicles is a prerequisite for 4-aminobutanoate uptake. The protein is Vesicular inhibitory amino acid transporter of Xenopus tropicalis (Western clawed frog).